The sequence spans 501 residues: 2-phosphoxylose phosphatase 1 (501 aa).

The Cytoplasmic segment spans residues 1-6 (MLLRNR). The helical; Signal-anchor for type II membrane protein transmembrane segment at 7–27 (FLLLLALAGLLAFLSLSLQFF) threads the bilayer. The Lumenal portion of the chain corresponds to 28-501 (SRWLPVSLQL…YYDACHQRLF (474 aa)). His120 acts as the Nucleophile in catalysis. N-linked (GlcNAc...) asparagine glycosylation is found at Asn328 and Asn377. Asp402 serves as the catalytic Proton donor. The N-linked (GlcNAc...) asparagine glycan is linked to Asn488.

This sequence belongs to the histidine acid phosphatase family.

It is found in the golgi apparatus membrane. It carries out the reaction 3-O-[beta-D-GlcA-(1-&gt;3)-beta-D-Gal-(1-&gt;3)-beta-D-Gal-(1-&gt;4)-beta-D-2-O-P-Xyl]-L-seryl-[protein] + H2O = 3-O-(beta-D-GlcA-(1-&gt;3)-beta-D-Gal-(1-&gt;3)-beta-D-Gal-(1-&gt;4)-beta-D-Xyl)-L-seryl-[protein] + phosphate. In terms of biological role, responsible for the 2-O-dephosphorylation of xylose in the glycosaminoglycan-protein linkage region of proteoglycans thereby regulating the amount of mature glycosaminoglycan (GAG) chains. Sulfated glycosaminoglycans (GAGs), including heparan sulfate and chondroitin sulfate, are synthesized on the so-called common GAG-protein linkage region (GlcUAbeta1-3Galbeta1-3Galbeta1-4Xylbeta1-O-Ser) of core proteins, which is formed by the stepwise addition of monosaccharide residues by the respective specific glycosyltransferases. Xylose 2-O-dephosphorylation during completion of linkage region formation is a prerequisite for the initiation and efficient elongation of the repeating disaccharide region of GAG chains. The chain is 2-phosphoxylose phosphatase 1 from Xenopus tropicalis (Western clawed frog).